A 72-amino-acid chain; its full sequence is UPF0270 protein ESA_04379 (72 aa).

This sequence belongs to the UPF0270 family.

This Cronobacter sakazakii (strain ATCC BAA-894) (Enterobacter sakazakii) protein is UPF0270 protein ESA_04379.